Consider the following 907-residue polypeptide: Leucine-rich repeat-containing G-protein coupled receptor 5 (907 aa).

Positions 1–21 (MDTSRLGVLLSLPVLLQLATG) are cleaved as a signal peptide. Residues 22 to 561 (GSSPRSGVLL…EHLLDGWLIR (540 aa)) lie on the Extracellular side of the membrane. The LRRNT domain maps to 25–66 (PRSGVLLRGCPTHCHCEPDGRMLLRVDCSDLGLSELPSNLSV). 2 disulfide bridges follow: Cys34–Cys40 and Cys38–Cys52. 2 N-linked (GlcNAc...) asparagine glycosylation sites follow: Asn63 and Asn77. 16 LRR repeats span residues 67–90 (FTSY…PSLR), 91–112 (FLEE…AFTG), 115–136 (SLKV…ALQN), 139–160 (SLQS…CFSG), 163–184 (SLRH…AFRS), 187–208 (ALQA…AFGN), 211–232 (SLVV…CFDG), 235–256 (SLET…IRTL), 258–279 (NLKE…AFVG), 282–303 (SLIT…AFQH), 306–328 (ELRT…TGTA), 329–350 (NLES…VCNQ), 353–374 (NLQV…SVCQ), 375–396 (KLQK…TFQQ), 399–420 (SLRS…AFST), and 423–446 (SLIK…HGLT). An N-linked (GlcNAc...) asparagine glycan is attached at Asn208. A disulfide bridge connects residues Cys348 and Cys373. Cys479 and Cys541 are joined by a disulfide. An N-linked (GlcNAc...) asparagine glycan is attached at Asn500. Residues 562-582 (IGVWTIAVLALTCNALVTSTV) traverse the membrane as a helical segment. The Cytoplasmic portion of the chain corresponds to 583-593 (FRSPLYISPIK). Residues 594-614 (LLIGVIAAVNMLTGVSSAVLA) form a helical membrane-spanning segment. Residues 615–638 (GVDAFTFGSFARHGAWWENGVGCH) are Extracellular-facing. Cysteines 637 and 712 form a disulfide. The chain crosses the membrane as a helical span at residues 639–659 (VIGFLSIFASESSVFLLTLAA). The Cytoplasmic segment spans residues 660-682 (LERGFSVKYSAKFETKAPFSSLK). The chain crosses the membrane as a helical span at residues 683–703 (VIILLCALLALTMAAVPLLGG). At 704-722 (SKYGASPLCLPLPFGEPST) the chain is on the extracellular side. The helical transmembrane segment at 723 to 743 (MGYMVALILLNSLCFLMMTIA) threads the bilayer. At 744-767 (YTKLYCNLDKGDLENIWDCSMVKH) the chain is on the cytoplasmic side. Residues 768 to 788 (IALLLFTNCILNCPVAFLSFS) form a helical membrane-spanning segment. At 789 to 802 (SLINLTFISPEVIK) the chain is on the extracellular side. The N-linked (GlcNAc...) asparagine glycan is linked to Asn792. A helical membrane pass occupies residues 803–823 (FILLVVVPLPACLNPLLYILF). At 824-907 (NPHFKEDLVS…LSSVAFVPCL (84 aa)) the chain is on the cytoplasmic side.

The protein belongs to the G-protein coupled receptor 1 family. In terms of assembly, identified in a complex composed of RNF43, LGR5 and RSPO1. Also interacts with other R-spondin ligands, including RSPO2, RSPO3 and RSPO4. In terms of tissue distribution, expressed in skeletal muscle, placenta, spinal cord, and various region of brain. Expressed at the base of crypts in colonic and small mucosa stem cells. In premalignant cancer expression is not restricted to the cript base. Overexpressed in cancers of the ovary, colon and liver.

It localises to the cell membrane. The protein resides in the golgi apparatus. It is found in the trans-Golgi network membrane. Its function is as follows. Receptor for R-spondins that potentiates the canonical Wnt signaling pathway and acts as a stem cell marker of the intestinal epithelium and the hair follicle. Upon binding to R-spondins (RSPO1, RSPO2, RSPO3 or RSPO4), associates with phosphorylated LRP6 and frizzled receptors that are activated by extracellular Wnt receptors, triggering the canonical Wnt signaling pathway to increase expression of target genes. In contrast to classical G-protein coupled receptors, does not activate heterotrimeric G-proteins to transduce the signal. Involved in the development and/or maintenance of the adult intestinal stem cells during postembryonic development. The chain is Leucine-rich repeat-containing G-protein coupled receptor 5 (LGR5) from Homo sapiens (Human).